Reading from the N-terminus, the 222-residue chain is Phosphoribosylformylglycinamidine synthase subunit PurQ (222 aa).

The region spanning Ala3–Ala222 is the Glutamine amidotransferase type-1 domain. Residue Cys86 is the Nucleophile of the active site. Catalysis depends on residues His194 and Glu196.

As to quaternary structure, part of the FGAM synthase complex composed of 1 PurL, 1 PurQ and 2 PurS subunits.

It localises to the cytoplasm. The catalysed reaction is N(2)-formyl-N(1)-(5-phospho-beta-D-ribosyl)glycinamide + L-glutamine + ATP + H2O = 2-formamido-N(1)-(5-O-phospho-beta-D-ribosyl)acetamidine + L-glutamate + ADP + phosphate + H(+). The enzyme catalyses L-glutamine + H2O = L-glutamate + NH4(+). It participates in purine metabolism; IMP biosynthesis via de novo pathway; 5-amino-1-(5-phospho-D-ribosyl)imidazole from N(2)-formyl-N(1)-(5-phospho-D-ribosyl)glycinamide: step 1/2. Functionally, part of the phosphoribosylformylglycinamidine synthase complex involved in the purines biosynthetic pathway. Catalyzes the ATP-dependent conversion of formylglycinamide ribonucleotide (FGAR) and glutamine to yield formylglycinamidine ribonucleotide (FGAM) and glutamate. The FGAM synthase complex is composed of three subunits. PurQ produces an ammonia molecule by converting glutamine to glutamate. PurL transfers the ammonia molecule to FGAR to form FGAM in an ATP-dependent manner. PurS interacts with PurQ and PurL and is thought to assist in the transfer of the ammonia molecule from PurQ to PurL. In Ruegeria sp. (strain TM1040) (Silicibacter sp.), this protein is Phosphoribosylformylglycinamidine synthase subunit PurQ.